Reading from the N-terminus, the 1463-residue chain is Collagen alpha-1(III) chain (1463 aa).

The first 23 residues, 1 to 23 (MMSFVQCGTWFLLTLLHPSLILA), serve as a signal peptide directing secretion. A propeptide spans 24–154 (QQSNVDELGC…CPTGGQNYSP (131 aa)) (N-terminal propeptide). The VWFC domain maps to 31-90 (LGCNYLGQSYESRDVWKPEPCQICVCDSGSVLCDDIMCDDEPLDCPNPEIPFGECCAICP). Positions 97 to 1195 (PVIPDGNRPQ…PGPPGAPGPC (1099 aa)) are disordered. The segment covering 147 to 156 (TGGQNYSPQF) has biased composition (polar residues). The segment at 155 to 169 (QFDSYDVKSGVGGMG) is nonhelical region (N-terminal). Positions 164-173 (GVGGMGGYPG) are enriched in gly residues. Positions 170-1195 (GYPGPAGPPG…PGPPGAPGPC (1026 aa)) are triple-helical region. The segment covering 174–184 (PAGPPGPPGPP) has biased composition (pro residues). The segment covering 186–198 (SSGHPGSPGSPGY) has biased composition (low complexity). The span at 228–240 (KDGESGRPGRPGE) shows a compositional bias: basic and acidic residues. Positions 250–259 (KGPAGIPGFP) are enriched in low complexity. Position 262 is a 5-hydroxylysine; alternate (Lys-262). Residue Lys-262 is glycosylated (O-linked (Gal...) hydroxylysine; alternate). The span at 265-276 (RGFDGRNGEKGE) shows a compositional bias: basic and acidic residues. Lys-283 is modified (5-hydroxylysine). Low complexity-rich tracts occupy residues 310–321 (PGLPGAAGARGN) and 354–379 (PAGS…AGAQ). A compositionally biased stretch (gly residues) spans 389 to 398 (GSPGGKGEMG). 2 stretches are compositionally biased toward low complexity: residues 399–429 (PAGI…QRGP) and 481–502 (PGER…PGEK). The span at 527-548 (GTPGGPGIRGMPGSPGGPGNDG) shows a compositional bias: gly residues. 2 stretches are compositionally biased toward low complexity: residues 606-615 (PAGKNGETGP) and 637-652 (QGLQ…PGEN). The segment covering 668–677 (GVPGGKGDSG) has biased composition (gly residues). The segment covering 678 to 691 (APGERGPPGTAGTP) has biased composition (low complexity). Residues 692–708 (GLRGGAGPPGPEGGKGP) are compositionally biased toward gly residues. A compositionally biased stretch (pro residues) spans 709 to 718 (AGPPGPPGTS). Basic and acidic residues predominate over residues 822 to 834 (AKGERGAPGEKGE). Residues 835–849 (GGPPGAAGPPGGSGP) are compositionally biased toward gly residues. Lys-859 bears the 5-hydroxylysine mark. Positions 863–879 (GSPGGPGAAGFPGGRGL) are enriched in gly residues. Pro residues predominate over residues 889–906 (PGPPGPSGAPGKDGPPGP). Composition is skewed to low complexity over residues 907-934 (AGNS…KGPP) and 945-960 (PLGI…LAGP). Lys-976 carries the post-translational modification 5-hydroxylysine. Pro residues predominate over residues 1045 to 1054 (PGHPGPPGPV). Positions 1068–1084 (PAGPSGAPGPAGARGAP) are enriched in low complexity. 5-hydroxylysine is present on residues Lys-1093 and Lys-1105. A compositionally biased stretch (low complexity) spans 1120 to 1132 (PGAAGHQGAVGSP). Over residues 1180 to 1192 (PGQPGPPGPPGAP) the composition is skewed to pro residues. Residues 1219–1463 (DDPMDFKINT…GVDIGPVCFL (245 aa)) constitute a propeptide, C-terminal propeptide. The Fibrillar collagen NC1 domain maps to 1229–1463 (EEIMSSLKSV…GVDIGPVCFL (235 aa)). Intrachain disulfides connect Cys-1259-Cys-1291, Cys-1299-Cys-1461, and Cys-1369-Cys-1414. Positions 1277, 1279, 1280, 1282, and 1285 each coordinate Ca(2+).

This sequence belongs to the fibrillar collagen family. Trimers of identical alpha 1(III) chains. The chains are linked to each other by interchain disulfide bonds. Trimers are also cross-linked via hydroxylysines. Interacts with ADGRG1. In terms of processing, O-glycosylated. Prolines at the third position of the tripeptide repeating unit (G-X-Y) are hydroxylated in some or all of the chains.

Its subcellular location is the secreted. It localises to the extracellular space. The protein localises to the extracellular matrix. Its function is as follows. Collagen type III occurs in most soft connective tissues along with type I collagen. Involved in regulation of cortical development. Is the major ligand of ADGRG1 in the developing brain and binding to ADGRG1 inhibits neuronal migration and activates the RhoA pathway by coupling ADGRG1 to GNA13 and possibly GNA12. This is Collagen alpha-1(III) chain (Col3a1) from Rattus norvegicus (Rat).